The chain runs to 626 residues: Ankyrin repeat domain-containing protein 13B (626 aa).

The residue at position 1 (Met1) is an N-acetylmethionine. ANK repeat units follow at residues 47 to 76 (RGRT…DVGR) and 80 to 109 (SGWT…YQRV). The interval 442-470 (PVPSVRGSPGSETPSPGSDSSSVSSSSST) is disordered. Over residues 448 to 470 (GSPGSETPSPGSDSSSVSSSSST) the composition is skewed to low complexity. Positions 503-522 (EDDDLLRFAIQQSLLEAGSE) constitute a UIM 1 domain. The interval 534 to 614 (NSKPGTHPMS…RRRVRQEEEE (81 aa)) is disordered. A compositionally biased stretch (pro residues) spans 554-575 (PPTPQRQPMPPAPVPSPRPSPG). UIM domains lie at 585-604 (SYDE…QEER) and 610-626 (QEEE…LTEQ).

Interacts with EGFR (ubiquitinated); the interaction is direct and may regulate EGFR internalization.

The protein localises to the cell membrane. It localises to the late endosome. It is found in the early endosome. In terms of biological role, ubiquitin-binding protein that specifically recognizes and binds 'Lys-63'-linked ubiquitin. Does not bind 'Lys-48'-linked ubiquitin. Positively regulates the internalization of ligand-activated EGFR by binding to the Ub moiety of ubiquitinated EGFR at the cell membrane. In Mus musculus (Mouse), this protein is Ankyrin repeat domain-containing protein 13B (Ankrd13b).